The sequence spans 560 residues: Dihydroxy-acid dehydratase (560 aa).

C52 serves as a coordination point for [2Fe-2S] cluster. Mg(2+) is bound at residue D84. Residue C125 coordinates [2Fe-2S] cluster. Positions 126 and 127 each coordinate Mg(2+). K127 carries the N6-carboxylysine modification. C197 is a [2Fe-2S] cluster binding site. Mg(2+) is bound at residue E449. The active-site Proton acceptor is the S475.

This sequence belongs to the IlvD/Edd family. In terms of assembly, homodimer. [2Fe-2S] cluster is required as a cofactor. The cofactor is Mg(2+).

It catalyses the reaction (2R)-2,3-dihydroxy-3-methylbutanoate = 3-methyl-2-oxobutanoate + H2O. It carries out the reaction (2R,3R)-2,3-dihydroxy-3-methylpentanoate = (S)-3-methyl-2-oxopentanoate + H2O. It functions in the pathway amino-acid biosynthesis; L-isoleucine biosynthesis; L-isoleucine from 2-oxobutanoate: step 3/4. The protein operates within amino-acid biosynthesis; L-valine biosynthesis; L-valine from pyruvate: step 3/4. Functionally, functions in the biosynthesis of branched-chain amino acids. Catalyzes the dehydration of (2R,3R)-2,3-dihydroxy-3-methylpentanoate (2,3-dihydroxy-3-methylvalerate) into 2-oxo-3-methylpentanoate (2-oxo-3-methylvalerate) and of (2R)-2,3-dihydroxy-3-methylbutanoate (2,3-dihydroxyisovalerate) into 2-oxo-3-methylbutanoate (2-oxoisovalerate), the penultimate precursor to L-isoleucine and L-valine, respectively. The protein is Dihydroxy-acid dehydratase of Sulfurisphaera tokodaii (strain DSM 16993 / JCM 10545 / NBRC 100140 / 7) (Sulfolobus tokodaii).